Consider the following 420-residue polypeptide: Serine--tRNA ligase (420 aa).

228-230 provides a ligand contact to L-serine; that stretch reads TAE. Residue 259 to 261 participates in ATP binding; that stretch reads RSE. Residue glutamate 282 participates in L-serine binding. An ATP-binding site is contributed by 346–349; it reads EISS. An L-serine-binding site is contributed by serine 382.

Belongs to the class-II aminoacyl-tRNA synthetase family. Type-1 seryl-tRNA synthetase subfamily. Homodimer. The tRNA molecule binds across the dimer.

It localises to the cytoplasm. It catalyses the reaction tRNA(Ser) + L-serine + ATP = L-seryl-tRNA(Ser) + AMP + diphosphate + H(+). It carries out the reaction tRNA(Sec) + L-serine + ATP = L-seryl-tRNA(Sec) + AMP + diphosphate + H(+). Its pathway is aminoacyl-tRNA biosynthesis; selenocysteinyl-tRNA(Sec) biosynthesis; L-seryl-tRNA(Sec) from L-serine and tRNA(Sec): step 1/1. Functionally, catalyzes the attachment of serine to tRNA(Ser). Is also able to aminoacylate tRNA(Sec) with serine, to form the misacylated tRNA L-seryl-tRNA(Sec), which will be further converted into selenocysteinyl-tRNA(Sec). This chain is Serine--tRNA ligase, found in Mycoplasmoides gallisepticum (strain R(low / passage 15 / clone 2)) (Mycoplasma gallisepticum).